We begin with the raw amino-acid sequence, 726 residues long: Peroxisomal fatty acid beta-oxidation multifunctional protein (726 aa).

This sequence in the N-terminal section; belongs to the enoyl-CoA hydratase/isomerase family. In the central section; belongs to the 3-hydroxyacyl-CoA dehydrogenase family. In terms of assembly, monomer.

The protein resides in the peroxisome. Its subcellular location is the cytoplasm. It is found in the cytoskeleton. The catalysed reaction is a (3S)-3-hydroxyacyl-CoA = a (2E)-enoyl-CoA + H2O. It carries out the reaction a 4-saturated-(3S)-3-hydroxyacyl-CoA = a (3E)-enoyl-CoA + H2O. The enzyme catalyses a (3Z)-enoyl-CoA = a 4-saturated (2E)-enoyl-CoA. It catalyses the reaction a (3E)-enoyl-CoA = a 4-saturated (2E)-enoyl-CoA. The catalysed reaction is (3S)-3-hydroxybutanoyl-CoA = (3R)-3-hydroxybutanoyl-CoA. It carries out the reaction a (3S)-3-hydroxyacyl-CoA + NAD(+) = a 3-oxoacyl-CoA + NADH + H(+). Its pathway is lipid metabolism; fatty acid beta-oxidation. Functionally, multifunctional enzyme involved in fatty acid beta-oxidation. Also binds to RNA and microtubules. Possible role in subcellular mRNA localization and RNA-cytoskeleton interactions. The sequence is that of Peroxisomal fatty acid beta-oxidation multifunctional protein (MFP) from Oryza sativa subsp. japonica (Rice).